A 305-amino-acid chain; its full sequence is Homoserine O-acetyltransferase (305 aa).

Residue Cys-142 is the Acyl-thioester intermediate of the active site. The substrate site is built by Lys-163 and Ser-192. Residue His-233 is the Proton acceptor of the active site. Glu-235 is an active-site residue. Arg-247 serves as a coordination point for substrate.

Belongs to the MetA family.

The protein localises to the cytoplasm. It catalyses the reaction L-homoserine + acetyl-CoA = O-acetyl-L-homoserine + CoA. It participates in amino-acid biosynthesis; L-methionine biosynthesis via de novo pathway; O-acetyl-L-homoserine from L-homoserine: step 1/1. Its function is as follows. Transfers an acetyl group from acetyl-CoA to L-homoserine, forming acetyl-L-homoserine. This Methanomassiliicoccus intestinalis (strain Issoire-Mx1) protein is Homoserine O-acetyltransferase.